Reading from the N-terminus, the 310-residue chain is ADP-L-glycero-D-manno-heptose-6-epimerase (310 aa).

NADP(+)-binding positions include 10 to 11 (FI), 31 to 32 (DN), K38, K53, 75 to 79 (EGACS), and N92. The active-site Proton acceptor is the Y140. K144 provides a ligand contact to NADP(+). N169 is a binding site for substrate. The NADP(+) site is built by V170 and K178. The Proton acceptor role is filled by K178. Substrate-binding positions include S180, H187, 201–204 (FAGS), R209, and Y272.

The protein belongs to the NAD(P)-dependent epimerase/dehydratase family. HldD subfamily. As to quaternary structure, homopentamer. It depends on NADP(+) as a cofactor.

The enzyme catalyses ADP-D-glycero-beta-D-manno-heptose = ADP-L-glycero-beta-D-manno-heptose. It functions in the pathway nucleotide-sugar biosynthesis; ADP-L-glycero-beta-D-manno-heptose biosynthesis; ADP-L-glycero-beta-D-manno-heptose from D-glycero-beta-D-manno-heptose 7-phosphate: step 4/4. In terms of biological role, catalyzes the interconversion between ADP-D-glycero-beta-D-manno-heptose and ADP-L-glycero-beta-D-manno-heptose via an epimerization at carbon 6 of the heptose. The sequence is that of ADP-L-glycero-D-manno-heptose-6-epimerase from Yersinia pseudotuberculosis serotype O:1b (strain IP 31758).